The sequence spans 1387 residues: MAPGCKSELRNVTNSHSNQPSNEGDAIKVFVRIRPAEEGARSADGEQSFCLSVLSQTTLRLHSNPDPKTFVFDYVAGMDTTQESVFSTVAKSIVESCMSGYNGTIFAYGQTGSGKTFTMMGPSDSDNFSHNLRGIIPRSFEYLFSLIDREKEKAGAGKSFLCKCSFIEVYNEQIYDLLDSASVGLYLREHIKKGVFVVGAVEQAVTSAAETYQVLSRGWRNRRVASTSMNRESSRSHAVFTITIESMEKSSETVNIRTSLLNLVDLAGSERQKDTHAEGMRLKEAGNINRSLSCLGQVITALVDVGNGKQRHICYRDSKLTFLLRDSLGGNAKTAIIANVHPGSRCFGETLSTLNFAQRAKLIKNKAVVNEDTQGNVSQLQAEVKRLKEQLSQFTSGQITPESLLARDKEKTNYIEYFLEAMLFFKKSEQEKKSLIEKITQLEDLTLKKEKFIQSNKMIVKFREDQIMRLERLHKEGRGSFLPEEQDRLLSELRDEVQTLREHVEHHPRLAKYAMENHSLREENRRLKLLAPVKRAHEIDAQSIARLEKAFAEVSSTETNDKGLQGFSPKALKESSFFTNTEKLKAQLLQIQTELNNSKQEYEEFKELTRKKQLELESELQSLQKANLNLENLLEATKVCKRQEVSQLNKLHAETLKIITTPTKAYQLCSRLVPKSSPEVGSFGFLCTESSSRLDNDILNEPVPPEMSEQALEAVSEELRTVQEQLSVLQVKLDEEERKNLKLQQNVDKLEHHSTQMQELFSSERSDWTKQQQEHVTQLSDLEKQLQDAQTKNEFLKCEVHDLRIVLNSADKELSLVKLEYSTFKENHEKELSQLSERHVQVQLQLDNARLENEKLLESQACLQDSYDNLQEVMKFEIDQLSKNLQNCKQENETLKSDLHNLVELFEAEKERNNKLSLQFEEDKENSSKEILKVLETVRQEKQKEMAKCEKQMAKIQKLEESLLATENVISSLEKSRESDKELVTNLMNQIQELRISIGEKSETIATLKQELQDINCKYNASLADKEESKELIRRQEVDILELKETLRLRILSEDIERDMLCEDLAHATEQLNMLTEASKKHSGLLQSAQEELTRKEALIQELQHKLNQEKEEVEQKKNEFSLKMRQLEHVMGSATEYPQSPKTPPHFQAHLAKLLETQEQEIEDGRASKTSLQHLVTKLNEDREVKNAEILRMKDQLCEMENLRLESQQLREKNWLLQRQLDDVKRQQESGDQSHPDSQQLKNEHEEIIKERLAKNKLIEEMLKMKTNLEEVQSALHSKEKACHRMSEEIERTRTLESRAFQEKEQLRSKLEEMYEERERTFLEMEMLKKQLEFLAEENGKLVGHQNLHQKIQYVVRLKKENIRLTEETEKLRAENLFLKEKKKEF.

Residues 1–23 form a disordered region; the sequence is MAPGCKSELRNVTNSHSNQPSNE. A compositionally biased stretch (polar residues) spans 10–22; sequence RNVTNSHSNQPSN. In terms of domain architecture, Kinesin motor spans 26–363; that stretch reads AIKVFVRIRP…LNFAQRAKLI (338 aa). 109–116 contacts ATP; the sequence is GQTGSGKT. The stretch at 368 to 1132 forms a coiled coil; sequence VVNEDTQGNV…LKMRQLEHVM (765 aa). Ser568 is subject to Phosphoserine. An N6-acetyllysine modification is found at Lys1009. A phosphoserine mark is found at Ser1141 and Ser1169.

It belongs to the TRAFAC class myosin-kinesin ATPase superfamily. Kinesin family. KLP2 subfamily. In terms of assembly, interacts with MKI67 and TPX2. As to expression, expressed in brain (neurons in the external germinal layer of the cerebellum and in ventricular zones) (at protein level). Expressed in spleen and testis.

The protein resides in the cytoplasm. It localises to the cytoskeleton. The protein localises to the spindle. Its function is as follows. Plus-end directed kinesin-like motor enzyme involved in mitotic spindle assembly. This Mus musculus (Mouse) protein is Kinesin-like protein KIF15 (Kif15).